A 347-amino-acid polypeptide reads, in one-letter code: NADH-ubiquinone oxidoreductase chain 2 (347 aa).

10 helical membrane passes run 13–33, 55–75, 96–116, 122–142, 151–171, 178–198, 199–219, 237–257, 274–294, and 326–346; these read IFTG…WLGL, AAIK…MAIL, LMIV…FWVP, VPLT…ISIM, TNIL…GGLN, ILAY…PYNP, DITI…FLIL, LTWL…LPPL, GNLI…YFYV, and LPTL…ILSI.

The protein belongs to the complex I subunit 2 family. As to quaternary structure, core subunit of respiratory chain NADH dehydrogenase (Complex I) which is composed of 45 different subunits. Interacts with TMEM242.

Its subcellular location is the mitochondrion inner membrane. It catalyses the reaction a ubiquinone + NADH + 5 H(+)(in) = a ubiquinol + NAD(+) + 4 H(+)(out). Functionally, core subunit of the mitochondrial membrane respiratory chain NADH dehydrogenase (Complex I) which catalyzes electron transfer from NADH through the respiratory chain, using ubiquinone as an electron acceptor. Essential for the catalytic activity and assembly of complex I. The chain is NADH-ubiquinone oxidoreductase chain 2 from Pongo abelii (Sumatran orangutan).